A 102-amino-acid polypeptide reads, in one-letter code: Small ribosomal subunit protein uS10 (102 aa).

It belongs to the universal ribosomal protein uS10 family. In terms of assembly, part of the 30S ribosomal subunit.

Involved in the binding of tRNA to the ribosomes. The chain is Small ribosomal subunit protein uS10 from Streptococcus equi subsp. zooepidemicus (strain MGCS10565).